The primary structure comprises 152 residues: SUZ RNA-binding domain-containing (152 aa).

Methionine 1 carries the post-translational modification N-acetylmethionine. Disordered regions lie at residues 30 to 86 and 99 to 152; these read TQKE…LPVK and RKRI…KQRR. A phosphoserine mark is found at serine 37, serine 39, and serine 51. In terms of domain architecture, SUZ spans 42 to 107; the sequence is KVPIVIQDDS…ARKRILGSAS (66 aa). Positions 66–79 are enriched in polar residues; sequence PTSNGVVSGPNSAS. Residues serine 105 and serine 107 each carry the phosphoserine modification. Residues 111-152 enclose the SUZ-C domain; sequence EQEKPILDRPTRISQPEDSRQPNNVIRQPLGPDGSQGFKQRR. Positions 113–130 are enriched in basic and acidic residues; sequence EKPILDRPTRISQPEDSR.

The protein belongs to the SZRD1 family.

In Bos taurus (Bovine), this protein is SUZ RNA-binding domain-containing (SZRD1).